The primary structure comprises 581 residues: Chaotic nuclear migration protein 67 (581 aa).

Phosphoserine is present on residues Ser17, Ser20, Ser72, Ser85, and Ser89. The tract at residues 86–150 is disordered; it reads YQESPGLQER…PTDEHTSPDI (65 aa). Residues 94 to 114 show a composition bias toward basic and acidic residues; the sequence is ERPKNEKDKSPIGTDVHKKDV. Ser151 is modified (phosphoserine). Coiled coils occupy residues 179 to 252, 306 to 363, and 373 to 451; these read LGYQ…DTIQ, FLCA…LSKQ, and KLTI…NTSE.

As to quaternary structure, interacts directly with ADY3 and YOR129C. Interacts with ADY4. Probable component of a SPB complex composed of ADY3, SSP1, DON1, MPC54, SPO21/MPC70, NUD1 and CNM67. In terms of processing, phosphorylated in its N-terminal part.

Its subcellular location is the cytoplasm. The protein localises to the cytoskeleton. It is found in the microtubule organizing center. It localises to the spindle pole body. In terms of biological role, involved in the pathway that organizes the shaping and sizing of the prospore membrane (PSM) during sporulation. Required for the proper formation of the spindle pole body (SPB) outer plaque. May connect the outer plaque to the central plaque embedded in the nuclear envelope. This Saccharomyces cerevisiae (strain ATCC 204508 / S288c) (Baker's yeast) protein is Chaotic nuclear migration protein 67 (CNM67).